The sequence spans 784 residues: E3 UFM1-protein ligase 1 homolog (784 aa).

The segment covering 398-414 (QEVDHGVMEEEKADKRE) has biased composition (basic and acidic residues). The interval 398–472 (QEVDHGVMEE…ASNKKGGKDP (75 aa)) is disordered.

The protein belongs to the UFL1 family.

E3 UFM1-protein ligase that mediates ufmylation of target proteins. The protein is E3 UFM1-protein ligase 1 homolog of Anopheles gambiae (African malaria mosquito).